We begin with the raw amino-acid sequence, 217 residues long: Non-structural protein NS3 (217 aa).

Belongs to the orbivirus NS3 family.

May play a role in the release of virions from infected cells. The protein is Non-structural protein NS3 (Segment-10) of African horse sickness virus 6 (AHSV-6).